A 278-amino-acid polypeptide reads, in one-letter code: MALKTFNPTTPSQRQLVIVDRSSLYKGKPVKALTEGLTKSGGRNNLGRITARFIGGGHKRSYRLVDFKRRKFDIEGTVERIEYDPNRTAFIALVTYSDGEQAYIIAPQRLAAGDKVIASEKAVDVKPGNTMPLQYIPVGSIIHNVEMKPGKGGQIARSAGSYAQLVGRDQGMAILRLNSGEQRLVSGVCLASIGAVSNPDHANINDGKAGRTVWRGKRPHNRGVVMNPVDHPHGGGEGRTSGGRHPVTPWGKPTKGKRTRSNKSTDKMIMRSRHQRKK.

The disordered stretch occupies residues arginine 218–lysine 278.

This sequence belongs to the universal ribosomal protein uL2 family. Part of the 50S ribosomal subunit. Forms a bridge to the 30S subunit in the 70S ribosome.

One of the primary rRNA binding proteins. Required for association of the 30S and 50S subunits to form the 70S ribosome, for tRNA binding and peptide bond formation. It has been suggested to have peptidyltransferase activity; this is somewhat controversial. Makes several contacts with the 16S rRNA in the 70S ribosome. The chain is Large ribosomal subunit protein uL2 from Rhizobium etli (strain ATCC 51251 / DSM 11541 / JCM 21823 / NBRC 15573 / CFN 42).